Consider the following 87-residue polypeptide: MTIFQRTIVVLIGTQLAASAVILFIFDLNSYNHFSGSFSWLHFLKELAGSFAFYLFSAGLFFLLIGLCAPSRKKKRISVHEKENSLK.

2 helical membrane passes run 8 to 28 (IVVLIGTQLAASAVILFIFDL) and 47 to 67 (LAGSFAFYLFSAGLFFLLIGL).

Its subcellular location is the cell membrane. This is an uncharacterized protein from Bacillus subtilis (strain 168).